The primary structure comprises 279 residues: Thymidylate synthase (279 aa).

Residue 133–134 (RR) participates in dUMP binding. Catalysis depends on Cys-154, which acts as the Nucleophile. Residues 178–181 (RSND), Asn-189, and 219–221 (HIY) contribute to the dUMP site. (6R)-5,10-methylene-5,6,7,8-tetrahydrofolate is bound at residue Asp-181. Ala-278 provides a ligand contact to (6R)-5,10-methylene-5,6,7,8-tetrahydrofolate.

The protein belongs to the thymidylate synthase family. Bacterial-type ThyA subfamily. Homodimer.

Its subcellular location is the cytoplasm. The catalysed reaction is dUMP + (6R)-5,10-methylene-5,6,7,8-tetrahydrofolate = 7,8-dihydrofolate + dTMP. Its pathway is pyrimidine metabolism; dTTP biosynthesis. In terms of biological role, catalyzes the reductive methylation of 2'-deoxyuridine-5'-monophosphate (dUMP) to 2'-deoxythymidine-5'-monophosphate (dTMP) while utilizing 5,10-methylenetetrahydrofolate (mTHF) as the methyl donor and reductant in the reaction, yielding dihydrofolate (DHF) as a by-product. This enzymatic reaction provides an intracellular de novo source of dTMP, an essential precursor for DNA biosynthesis. This is Thymidylate synthase from Streptococcus pneumoniae (strain 70585).